Reading from the N-terminus, the 627-residue chain is BURP domain-containing protein 12 (627 aa).

Residues 1–25 (MASPPHLPLLLLLLVVVCNAAGGDG) form the signal peptide. Residues asparagine 119, asparagine 175, asparagine 251, asparagine 366, asparagine 384, and asparagine 530 are each glycosylated (N-linked (GlcNAc...) asparagine). The BURP domain occupies 415–626 (FFRETELVSG…FEGDMTWTVA (212 aa)).

As to expression, expressed in stems, leaves, shoot and panicles.

This chain is BURP domain-containing protein 12 (BURP12), found in Oryza sativa subsp. japonica (Rice).